Reading from the N-terminus, the 350-residue chain is Biotin synthase (350 aa).

Residues 38–257 enclose the Radical SAM core domain; it reads NKVQVSTLLS…AVARIIMPMS (220 aa). Residues Cys53, Cys57, and Cys60 each contribute to the [4Fe-4S] cluster site. Positions 97, 128, 188, and 260 each coordinate [2Fe-2S] cluster.

It belongs to the radical SAM superfamily. Biotin synthase family. Homodimer. [4Fe-4S] cluster is required as a cofactor. Requires [2Fe-2S] cluster as cofactor.

It catalyses the reaction (4R,5S)-dethiobiotin + (sulfur carrier)-SH + 2 reduced [2Fe-2S]-[ferredoxin] + 2 S-adenosyl-L-methionine = (sulfur carrier)-H + biotin + 2 5'-deoxyadenosine + 2 L-methionine + 2 oxidized [2Fe-2S]-[ferredoxin]. It functions in the pathway cofactor biosynthesis; biotin biosynthesis; biotin from 7,8-diaminononanoate: step 2/2. Catalyzes the conversion of dethiobiotin (DTB) to biotin by the insertion of a sulfur atom into dethiobiotin via a radical-based mechanism. This is Biotin synthase from Photobacterium profundum (strain SS9).